The sequence spans 431 residues: CCA-adding enzyme (431 aa).

2 residues coordinate ATP: S50 and K53. CTP-binding residues include S50 and K53. D61, D63, and D112 together coordinate Mg(2+). ATP-binding residues include H135, K155, and Y164. 3 residues coordinate CTP: H135, K155, and Y164.

Belongs to the tRNA nucleotidyltransferase/poly(A) polymerase family. Archaeal CCA-adding enzyme subfamily. In terms of assembly, homodimer. It depends on Mg(2+) as a cofactor.

It carries out the reaction a tRNA precursor + 2 CTP + ATP = a tRNA with a 3' CCA end + 3 diphosphate. The catalysed reaction is a tRNA with a 3' CCA end + 2 CTP + ATP = a tRNA with a 3' CCACCA end + 3 diphosphate. Catalyzes the addition and repair of the essential 3'-terminal CCA sequence in tRNAs without using a nucleic acid template. Adds these three nucleotides in the order of C, C, and A to the tRNA nucleotide-73, using CTP and ATP as substrates and producing inorganic pyrophosphate. tRNA 3'-terminal CCA addition is required both for tRNA processing and repair. Also involved in tRNA surveillance by mediating tandem CCA addition to generate a CCACCA at the 3' terminus of unstable tRNAs. While stable tRNAs receive only 3'-terminal CCA, unstable tRNAs are marked with CCACCA and rapidly degraded. In Thermoplasma acidophilum (strain ATCC 25905 / DSM 1728 / JCM 9062 / NBRC 15155 / AMRC-C165), this protein is CCA-adding enzyme.